A 250-amino-acid chain; its full sequence is 3-deoxy-manno-octulosonate cytidylyltransferase (250 aa).

It belongs to the KdsB family.

It localises to the cytoplasm. It catalyses the reaction 3-deoxy-alpha-D-manno-oct-2-ulosonate + CTP = CMP-3-deoxy-beta-D-manno-octulosonate + diphosphate. It participates in nucleotide-sugar biosynthesis; CMP-3-deoxy-D-manno-octulosonate biosynthesis; CMP-3-deoxy-D-manno-octulosonate from 3-deoxy-D-manno-octulosonate and CTP: step 1/1. It functions in the pathway bacterial outer membrane biogenesis; lipopolysaccharide biosynthesis. In terms of biological role, activates KDO (a required 8-carbon sugar) for incorporation into bacterial lipopolysaccharide in Gram-negative bacteria. In Francisella tularensis subsp. holarctica (strain FTNF002-00 / FTA), this protein is 3-deoxy-manno-octulosonate cytidylyltransferase.